Here is a 292-residue protein sequence, read N- to C-terminus: ATP synthase gamma chain (292 aa).

This sequence belongs to the ATPase gamma chain family. In terms of assembly, F-type ATPases have 2 components, CF(1) - the catalytic core - and CF(0) - the membrane proton channel. CF(1) has five subunits: alpha(3), beta(3), gamma(1), delta(1), epsilon(1). CF(0) has three main subunits: a, b and c.

It localises to the cell membrane. Functionally, produces ATP from ADP in the presence of a proton gradient across the membrane. The gamma chain is believed to be important in regulating ATPase activity and the flow of protons through the CF(0) complex. The chain is ATP synthase gamma chain from Streptococcus pneumoniae serotype 2 (strain D39 / NCTC 7466).